The following is a 537-amino-acid chain: Beta-hexosaminidase subunit beta (537 aa).

The signal sequence occupies residues 1–23; sequence MPGSPRRAPGLLLQALVAMVSLA. A glycan (N-linked (GlcNAc...) asparagine) is linked at Asn62. Cys69 and Cys115 form a disulfide bridge. 2 N-linked (GlcNAc...) asparagine glycosylation sites follow: Asn168 and Asn305. Intrachain disulfides connect Cys287–Cys338 and Cys512–Cys529. The active-site Proton donor is Glu333.

The protein belongs to the glycosyl hydrolase 20 family. In terms of assembly, there are 3 forms of beta-hexosaminidase: hexosaminidase A is a heterodimer composed of one subunit alpha and one subunit beta (chain A and B); hexosaminidase B is a homodimer of two beta subunits (two chains A and B); hexosaminidase S is a homodimer of two alpha subunits. The composition of the dimer (isozyme A versus isozyme S) has a significant effect on the substrate specificity of the alpha subunit active site.

The protein resides in the lysosome. It localises to the cytoplasmic vesicle. Its subcellular location is the secretory vesicle. It is found in the cortical granule. The enzyme catalyses Hydrolysis of terminal non-reducing N-acetyl-D-hexosamine residues in N-acetyl-beta-D-hexosaminides.. The catalysed reaction is N-acetyl-beta-D-galactosaminyl-(1-&gt;4)-beta-D-3-sulfogalactosyl-(1-&gt;4)-beta-D-glucosyl-(1&lt;-&gt;1')-ceramide + H2O = a beta-D-3-sulfogalactosyl-(1-&gt;4)-beta-D-glucosyl-(1&lt;-&gt;1')-ceramide + N-acetyl-beta-D-galactosamine. It catalyses the reaction a ganglioside GM2 (d18:1(4E)) + H2O = a ganglioside GM3 (d18:1(4E)) + N-acetyl-beta-D-galactosamine. It carries out the reaction a ganglioside GM2 + H2O = a ganglioside GM3 + N-acetyl-beta-D-galactosamine. The enzyme catalyses beta-D-GalNAc-(1-&gt;4)-alpha-L-IdoA-(1-&gt;3)-beta-D-GalNAc-4-sulfate-(1-&gt;4)-alpha-L-IdoA-(1-&gt;3)-D-GalNAc-4-sulfate + H2O = alpha-L-IdoA-(1-&gt;3)-beta-D-GalNAc-4-sulfate-(1-&gt;4)-alpha-L-IdoA-(1-&gt;3)-D-GalNAc-4-sulfate + N-acetyl-D-galactosamine. The catalysed reaction is N-acetyl-beta-D-6-sulfogalactosaminyl-(1-&gt;4)-alpha-L-iduronyl-(1-&gt;3)-N-acetyl-D-6-sulfogalactosamine + H2O = alpha-L-iduronyl-(1-&gt;3)-N-acetyl-D-6-sulfogalactosamine + N-acetyl-D-6-sulfogalactosamine. With respect to regulation, addition of GM2A stimulates the hydrolysis of sulfated glycosphingolipid SM2 and the ganglioside GM2. In terms of biological role, hydrolyzes the non-reducing end N-acetyl-D-hexosamine and/or sulfated N-acetyl-D-hexosamine of glycoconjugates, such as the oligosaccharide moieties from proteins and neutral glycolipids, or from certain mucopolysaccharides. The isozyme B does not hydrolyze each of these substrates, however hydrolyzes efficiently neutral oligosaccharide. Only the isozyme A is responsible for the degradation of GM2 gangliosides in the presence of GM2A. During fertilization is responsible, at least in part, for the zona block to polyspermy. Present in the cortical granules of non-activated oocytes, is exocytosed during the cortical reaction in response to oocyte activation and inactivates the sperm galactosyltransferase-binding site, accounting for the block in sperm binding to the zona pellucida. The chain is Beta-hexosaminidase subunit beta from Rattus norvegicus (Rat).